The chain runs to 307 residues: Cytochrome c1 2, heme protein, mitochondrial (307 aa).

Residues 1-64 (MVGGGVIRQL…LLSFSTVASA (64 aa)) constitute a mitochondrion transit peptide. At 65–270 (DEAEHGLECP…EPEMEERKLM (206 aa)) the chain is on the mitochondrial intermembrane side. One can recognise a Cytochrome c domain in the interval 90–197 (ASIRRGHQVY…NGQNYVFALL (108 aa)). Heme c contacts are provided by cysteine 103, cysteine 106, histidine 107, and methionine 226. A helical membrane pass occupies residues 271–288 (GFKWIFLLSLALLQAAYY). Residues 289–307 (RRLKWSVLKSRKLVLDVVN) lie on the Mitochondrial matrix side of the membrane.

This sequence belongs to the cytochrome c family. Component of the ubiquinol-cytochrome c oxidoreductase (cytochrome b-c1 complex, complex III, CIII), a multisubunit enzyme composed of 10 subunits. The complex is composed of 3 respiratory subunits cytochrome b (MT-CYB), cytochrome c1 (CYC1-1 or CYC1-2) and Rieske protein (UCR1-1 or UCR1-2), 2 core protein subunits MPPalpha1 (or MPPalpha2) and MPPB, and 5 low-molecular weight protein subunits QCR7-1 (or QCR7-2), UCRQ-1 (or UCRQ-2), QCR9, UCRY and probably QCR6-1 (or QCR6-2). The complex exists as an obligatory dimer and forms supercomplexes (SCs) in the inner mitochondrial membrane with NADH-ubiquinone oxidoreductase (complex I, CI), resulting in different assemblies (supercomplexes SCI(1)III(2) and SCI(2)III(4)). In terms of processing, binds 1 heme c group covalently per subunit.

The protein localises to the mitochondrion inner membrane. In terms of biological role, component of the ubiquinol-cytochrome c oxidoreductase, a multisubunit transmembrane complex that is part of the mitochondrial electron transport chain which drives oxidative phosphorylation. The respiratory chain contains 3 multisubunit complexes succinate dehydrogenase (complex II, CII), ubiquinol-cytochrome c oxidoreductase (cytochrome b-c1 complex, complex III, CIII) and cytochrome c oxidase (complex IV, CIV), that cooperate to transfer electrons derived from NADH and succinate to molecular oxygen, creating an electrochemical gradient over the inner membrane that drives transmembrane transport and the ATP synthase. The cytochrome b-c1 complex catalyzes electron transfer from ubiquinol to cytochrome c, linking this redox reaction to translocation of protons across the mitochondrial inner membrane, with protons being carried across the membrane as hydrogens on the quinol. In the process called Q cycle, 2 protons are consumed from the matrix, 4 protons are released into the intermembrane space and 2 electrons are passed to cytochrome c. Cytochrome c1 is a catalytic core subunit containing a c-type heme. It transfers electrons from the [2Fe-2S] iron-sulfur cluster of the Rieske protein to cytochrome c. This is Cytochrome c1 2, heme protein, mitochondrial (CYC1-2) from Arabidopsis thaliana (Mouse-ear cress).